Reading from the N-terminus, the 321-residue chain is Peroxidase 70 (321 aa).

A signal peptide spans 1-25 (MASSSFTSLSVMVLLCLAAAAVASA). Pyrrolidone carboxylic acid is present on Q26. Intrachain disulfides connect C36-C116, C69-C74, C122-C317, and C201-C226. The active-site Proton acceptor is H67. Ca(2+)-binding residues include D68, V71, G73, D75, and S77. N81 carries N-linked (GlcNAc...) asparagine glycosylation. P164 serves as a coordination point for substrate. N172 carries N-linked (GlcNAc...) asparagine glycosylation. Residue H194 coordinates heme b. T195 provides a ligand contact to Ca(2+). N210 carries N-linked (GlcNAc...) asparagine glycosylation. Ca(2+) is bound by residues D241, T244, and D249.

The protein belongs to the peroxidase family. Classical plant (class III) peroxidase subfamily. Heme b is required as a cofactor. It depends on Ca(2+) as a cofactor.

It is found in the secreted. The catalysed reaction is 2 a phenolic donor + H2O2 = 2 a phenolic radical donor + 2 H2O. Functionally, removal of H(2)O(2), oxidation of toxic reductants, biosynthesis and degradation of lignin, suberization, auxin catabolism, response to environmental stresses such as wounding, pathogen attack and oxidative stress. These functions might be dependent on each isozyme/isoform in each plant tissue. The protein is Peroxidase 70 (PER70) of Zea mays (Maize).